A 525-amino-acid chain; its full sequence is Bifunctional enzyme NanE/NanK (525 aa).

The interval 1–241 (MRGSPRNLCR…DAVESAAKPS (241 aa)) is manNAc-6-P epimerase. The manNAc kinase stretch occupies residues 242–525 (SPVLAFDIGG…VADLAATYFS (284 aa)). ATP contacts are provided by residues 246-253 (AFDIGGTK) and 372-379 (GIGGGIVL).

In the N-terminal section; belongs to the NanE family. This sequence in the C-terminal section; belongs to the ROK (NagC/XylR) family. NanK subfamily.

The enzyme catalyses an N-acyl-D-glucosamine 6-phosphate = an N-acyl-D-mannosamine 6-phosphate. It catalyses the reaction an N-acyl-D-mannosamine + ATP = an N-acyl-D-mannosamine 6-phosphate + ADP + H(+). It functions in the pathway amino-sugar metabolism; N-acetylneuraminate degradation; D-fructose 6-phosphate from N-acetylneuraminate: step 2/5. It participates in amino-sugar metabolism; N-acetylneuraminate degradation; D-fructose 6-phosphate from N-acetylneuraminate: step 3/5. Its function is as follows. Converts N-acetylmannosamine-6-phosphate (ManNAc-6-P) to N-acetylglucosamine-6-phosphate (GlcNAc-6-P). Catalyzes the phosphorylation of N-acetylmannosamine (ManNAc) to ManNAc-6-P. The protein is Bifunctional enzyme NanE/NanK (nanEK) of Brucella suis biovar 1 (strain 1330).